Here is a 517-residue protein sequence, read N- to C-terminus: Cobyric acid synthase (517 aa).

In terms of domain architecture, GATase cobBQ-type spans 253 to 453 (EVEIAVIKLP…IHGILDNDSL (201 aa)). The active-site Nucleophile is the cysteine 334. Histidine 445 is an active-site residue.

It belongs to the CobB/CobQ family. CobQ subfamily.

The protein operates within cofactor biosynthesis; adenosylcobalamin biosynthesis. Its function is as follows. Catalyzes amidations at positions B, D, E, and G on adenosylcobyrinic A,C-diamide. NH(2) groups are provided by glutamine, and one molecule of ATP is hydrogenolyzed for each amidation. The protein is Cobyric acid synthase of Moorella thermoacetica (strain ATCC 39073 / JCM 9320).